The following is a 403-amino-acid chain: S-adenosylmethionine synthase (403 aa).

141–146 provides a ligand contact to ATP; that stretch reads GQGSVD.

Belongs to the AdoMet synthase 2 family. Requires Mg(2+) as cofactor.

The enzyme catalyses L-methionine + ATP + H2O = S-adenosyl-L-methionine + phosphate + diphosphate. The protein operates within amino-acid biosynthesis; S-adenosyl-L-methionine biosynthesis; S-adenosyl-L-methionine from L-methionine: step 1/1. Its function is as follows. Catalyzes the formation of S-adenosylmethionine from methionine and ATP. The polypeptide is S-adenosylmethionine synthase (Methanococcus aeolicus (strain ATCC BAA-1280 / DSM 17508 / OCM 812 / Nankai-3)).